A 176-amino-acid polypeptide reads, in one-letter code: MDLPGPIHDFLLVFLGSGIILGGLGVVLLTNPIFSAFSLGLVLFCISLFHIPSNSHFVAAAQLLIYVGAINVLIIFAVMFTNGSEYYNDFHVWTVGDGVTSLVCTSIFVSLITTILDTSWYGIIWTTRSNQIIEQDLISNGQQIGIHLSTDFFLPFELVSIILLVALIGAIAMARQ.

5 consecutive transmembrane segments (helical) span residues phenylalanine 10–threonine 30, proline 32–proline 52, alanine 60–phenylalanine 80, isoleucine 107–threonine 127, and phenylalanine 152–alanine 172.

It belongs to the complex I subunit 6 family. As to quaternary structure, NDH is composed of at least 16 different subunits, 5 of which are encoded in the nucleus.

The protein localises to the plastid. Its subcellular location is the chloroplast thylakoid membrane. It catalyses the reaction a plastoquinone + NADH + (n+1) H(+)(in) = a plastoquinol + NAD(+) + n H(+)(out). It carries out the reaction a plastoquinone + NADPH + (n+1) H(+)(in) = a plastoquinol + NADP(+) + n H(+)(out). In terms of biological role, NDH shuttles electrons from NAD(P)H:plastoquinone, via FMN and iron-sulfur (Fe-S) centers, to quinones in the photosynthetic chain and possibly in a chloroplast respiratory chain. The immediate electron acceptor for the enzyme in this species is believed to be plastoquinone. Couples the redox reaction to proton translocation, and thus conserves the redox energy in a proton gradient. This is NAD(P)H-quinone oxidoreductase subunit 6, chloroplastic (ndhG) from Buxus microphylla (Littleleaf boxwood).